We begin with the raw amino-acid sequence, 1070 residues long: Inactive tyrosine-protein kinase 7 (1070 aa).

A signal peptide spans 1–30; it reads MGAARGSPARPRRLPLLSVLLLPLLGGTQT. 7 Ig-like C2-type domains span residues 31 to 120, 128 to 218, 225 to 317, 309 to 407, 412 to 497, 503 to 586, and 578 to 680; these read AIVF…ASFN, PVVL…FTLS, ARVV…EATL, PPII…VNIT, PSWL…ARVQ, KFTP…HVQL, and GQIR…APLY. The Extracellular segment spans residues 31-704; it reads AIVFIKQPSS…SPPPYKMIQT (674 aa). The cysteines at positions 53 and 101 are disulfide-linked. N-linked (GlcNAc...) asparagine glycans are attached at residues Asn116, Asn175, Asn184, Asn214, Asn268, and Asn283. Residues Cys150 and Cys200 are joined by a disulfide bond. 2 cysteine pairs are disulfide-bonded: Cys246–Cys301 and Cys343–Cys391. 4 N-linked (GlcNAc...) asparagine glycosylation sites follow: Asn405, Asn463, Asn567, and Asn646. 3 cysteine pairs are disulfide-bonded: Cys433–Cys481, Cys524–Cys570, and Cys613–Cys664. Residues 705–725 traverse the membrane as a helical segment; it reads IGLSVGAAVAYIIAVLGLMFY. The Cytoplasmic segment spans residues 726-1070; it reads CKKRCKAKRL…LGDSTVDSKP (345 aa). Disordered stretches follow at residues 736 to 759 and 773 to 793; these read QKQP…NGQP and GSGP…HFPR. Residues 794-1070 are interaction with CTNNB1; it reads SSLQPITTLG…LGDSTVDSKP (277 aa). A Protein kinase; inactive domain is found at 796 to 1066; that stretch reads LQPITTLGKS…IASALGDSTV (271 aa). Phosphoserine is present on Ser1064.

It belongs to the protein kinase superfamily. Tyr protein kinase family. Insulin receptor subfamily. In terms of assembly, interacts with CTNNB1. MMP14 cleaves PTK7 between Pro-621 and Leu-622 generating an N-terminal soluble (70 kDa) fragment and a membrane C-terminal (50 kDa) fragment. Proteolysis by MMP14 regulates PTK7 function in non-canonical Wnt signaling pathway. Highly expressed in lung, liver, pancreas, kidney, placenta and melanocytes. Weakly expressed in thyroid gland, ovary, brain, heart and skeletal muscle. Also expressed in erythroleukemia cells. But not expressed in colon.

It is found in the membrane. The protein localises to the cell junction. In terms of biological role, inactive tyrosine kinase involved in Wnt signaling pathway. Component of both the non-canonical (also known as the Wnt/planar cell polarity signaling) and the canonical Wnt signaling pathway. Functions in cell adhesion, cell migration, cell polarity, proliferation, actin cytoskeleton reorganization and apoptosis. Has a role in embryogenesis, epithelial tissue organization and angiogenesis. The sequence is that of Inactive tyrosine-protein kinase 7 (PTK7) from Homo sapiens (Human).